Here is a 239-residue protein sequence, read N- to C-terminus: Ribonuclease HII (239 aa).

One can recognise an RNase H type-2 domain in the interval 30-221 (GPVAGVDEVG…VRRLVTAGTP (192 aa)). A divalent metal cation is bound by residues Asp36, Glu37, and Asp130.

This sequence belongs to the RNase HII family. Mn(2+) is required as a cofactor. Mg(2+) serves as cofactor.

The protein resides in the cytoplasm. The catalysed reaction is Endonucleolytic cleavage to 5'-phosphomonoester.. Its function is as follows. Endonuclease that specifically degrades the RNA of RNA-DNA hybrids. This is Ribonuclease HII from Mycobacterium sp. (strain JLS).